Consider the following 548-residue polypeptide: Thermolysin (548 aa).

Positions 1-28 are cleaved as a signal peptide; it reads MKMKMKLASFGLAAGLAAQVFLPYNALA. Residues 29–232 constitute a propeptide, activation peptide; the sequence is STEHVTWNQQ…DAAKPGDVKS (204 aa). The Ca(2+) site is built by D289, D291, Q293, and D370. H374 lines the Zn(2+) pocket. E375 is an active-site residue. Positions 378 and 398 each coordinate Zn(2+). Residues E409, N415, D417, E419, E422, Y425, T426, I429, and D432 each coordinate Ca(2+). Catalysis depends on H463, which acts as the Proton donor.

It belongs to the peptidase M4 family. Requires Ca(2+) as cofactor. Zn(2+) is required as a cofactor.

The protein resides in the secreted. It carries out the reaction Preferential cleavage: Xaa-|-Leu &gt; Xaa-|-Phe.. Functionally, extracellular zinc metalloprotease. The polypeptide is Thermolysin (npr) (Bacillus thermoproteolyticus).